The following is a 453-amino-acid chain: DNA repair protein RadA (453 aa).

Residues 10–27 (CQECGYQSPKYLGRCPNC) form a C4-type zinc finger. 95 to 102 (GDPGIGKS) contacts ATP. Residues 251–255 (KNRFG) carry the RadA KNRFG motif motif. The lon-protease-like stretch occupies residues 350–453 (DAYLKSAGGV…VGQVLNAVFS (104 aa)).

Belongs to the RecA family. RadA subfamily.

Functionally, DNA-dependent ATPase involved in processing of recombination intermediates, plays a role in repairing DNA breaks. Stimulates the branch migration of RecA-mediated strand transfer reactions, allowing the 3' invading strand to extend heteroduplex DNA faster. Binds ssDNA in the presence of ADP but not other nucleotides, has ATPase activity that is stimulated by ssDNA and various branched DNA structures, but inhibited by SSB. Does not have RecA's homology-searching function. This Streptococcus pyogenes serotype M1 protein is DNA repair protein RadA.